Reading from the N-terminus, the 285-residue chain is HTH-type transcriptional regulator MurR (285 aa).

The HTH rpiR-type domain maps to 1–77; that stretch reads MLYLTKISNA…MALIGEYSAS (77 aa). Residues 37 to 56 constitute a DNA-binding region (H-T-H motif); that stretch reads SRQMAKQLGISQSSIVKFAQ. Residues 128–268 form the SIS domain; that stretch reads IIDVISKAQF…FVGLVQLNDV (141 aa).

Homotetramer.

It functions in the pathway amino-sugar metabolism; N-acetylmuramate degradation [regulation]. Functionally, represses the expression of the murPQ operon involved in the uptake and degradation of N-acetylmuramic acid (MurNAc). Binds to two adjacent inverted repeats within the operator region. MurNAc 6-phosphate, the substrate of MurQ, is the specific inducer that weakens binding of MurR to the operator. In Escherichia coli (strain B / BL21-DE3), this protein is HTH-type transcriptional regulator MurR.